A 591-amino-acid chain; its full sequence is L-fucose isomerase (591 aa).

Catalysis depends on proton acceptor residues Glu-337 and Asp-361. Mn(2+) contacts are provided by Glu-337, Asp-361, and His-528.

It belongs to the L-fucose isomerase family. Homohexamer. It depends on Mn(2+) as a cofactor.

The protein resides in the cytoplasm. The catalysed reaction is L-fucose = L-fuculose. Its pathway is carbohydrate degradation; L-fucose degradation; L-lactaldehyde and glycerone phosphate from L-fucose: step 1/3. Its function is as follows. Converts the aldose L-fucose into the corresponding ketose L-fuculose. In Escherichia coli (strain SE11), this protein is L-fucose isomerase.